Reading from the N-terminus, the 127-residue chain is Protein SPIRAL1-like 4 (127 aa).

The tract at residues 1 to 127 is disordered; sequence MGKARGVNSG…FGSGPCGSDK (127 aa). The span at 39 to 48 shows a compositional bias: low complexity; sequence TTTTTTTTTT. Serine 80 is subject to Phosphoserine. The span at 80-94 shows a compositional bias: polar residues; that stretch reads SPNNYYRSDGQNCGN.

Belongs to the SPIRAL1 family. As to expression, ubiquitous.

In terms of biological role, acts redundantly with SPR1 in maintaining the cortical microtubules organization essential for anisotropic cell growth. The sequence is that of Protein SPIRAL1-like 4 (SP1L4) from Arabidopsis thaliana (Mouse-ear cress).